Consider the following 32-residue polypeptide: Cathepsin B-like cysteine proteinase (32 aa).

Positions 1–22 (KPNYKRQFEPFSDELIHYINLE) are cleaved as a propeptide — activation peptide.

This sequence belongs to the peptidase C1 family.

Thiol protease. The chain is Cathepsin B-like cysteine proteinase from Fasciola hepatica (Liver fluke).